A 342-amino-acid chain; its full sequence is Glucokinase (342 aa).

Gly15 to Thr20 contacts ATP.

Belongs to the bacterial glucokinase family.

The protein resides in the cytoplasm. It catalyses the reaction D-glucose + ATP = D-glucose 6-phosphate + ADP + H(+). The protein is Glucokinase of Ralstonia nicotianae (strain ATCC BAA-1114 / GMI1000) (Ralstonia solanacearum).